The following is a 326-amino-acid chain: Aldo-keto reductase family 1 member D1 (326 aa).

NADP(+) is bound by residues 22–26 and aspartate 53; that span reads GLGTY. A substrate-binding site is contributed by tyrosine 26. Substrate contacts are provided by tyrosine 58, tryptophan 89, glutamate 120, and tyrosine 132. Tyrosine 58 acts as the Proton donor in catalysis. NADP(+) contacts are provided by residues 169 to 170, glutamine 193, and 219 to 224; these read SN and YSPLGT. Tryptophan 230 provides a ligand contact to substrate. 273–283 lines the NADP(+) pocket; it reads KSFNPERIKEN.

Belongs to the aldo/keto reductase family.

The protein localises to the cytoplasm. The enzyme catalyses 5beta-cholestan-3-one + NADP(+) = cholest-4-en-3-one + NADPH + H(+). It catalyses the reaction 4,5beta-dihydrocortisone + NADP(+) = cortisone + NADPH + H(+). It carries out the reaction cortisol + NADPH + H(+) = 5beta-dihydrocortisol + NADP(+). The catalysed reaction is corticosterone + NADPH + H(+) = 5beta-dihydrocorticosterone + NADP(+). The enzyme catalyses 7alpha,12alpha-dihydroxycholest-4-en-3-one + NADPH + H(+) = 7alpha,12alpha-dihydroxy-5beta-cholestan-3-one + NADP(+). It catalyses the reaction 7alpha-hydroxycholest-4-en-3-one + NADPH + H(+) = 7alpha-hydroxy-5beta-cholestan-3-one + NADP(+). It carries out the reaction epitestosterone + NADPH + H(+) = 5beta-dihydroepitestosterone + NADP(+). The catalysed reaction is androst-4-ene-3,17-dione + NADPH + H(+) = 5beta-androstane-3,17-dione + NADP(+). The enzyme catalyses progesterone + NADPH + H(+) = 5beta-pregnan-3,20-dione + NADP(+). It catalyses the reaction 21-hydroxyprogesterone + NADPH + H(+) = 5beta-dihydrodeoxycorticosterone + NADP(+). It carries out the reaction aldosterone + NADPH + H(+) = 5beta-dihydroaldosterone + NADP(+). The catalysed reaction is 17beta-hydroxyandrosta-1,4-dien-3-one + NADPH + H(+) = 17beta-hydroxy-5beta-androst-1-en-3-one + NADP(+). The enzyme catalyses 17beta-hydroxyestr-4-en-3-one + NADPH + H(+) = 17beta-hydroxy-5beta-estran-3-one + NADP(+). It catalyses the reaction 5beta-dihydrotestosterone + NADP(+) = testosterone + NADPH + H(+). It carries out the reaction androst-4-ene-3,11,17-trione + NADPH + H(+) = 17beta-hydroxyandrost-4-ene-3,11-dione + NADP(+). Subject to inhibition by high substrate concentrations. Inhibited by testosterone concentrations above 10 uM. Inhibited by the primary and secondary bile acids chenodeoxycholic acid and ursodeoxycholic acid. Functionally, catalyzes the stereospecific NADPH-dependent reduction of the C4-C5 double bond of bile acid intermediates and steroid hormones carrying a delta(4)-3-one structure to yield an A/B cis-ring junction. This cis-configuration is crucial for bile acid biosynthesis and plays important roles in steroid metabolism. Capable of reducing a broad range of delta-(4)-3-ketosteroids from C18 (such as, 17beta-hydroxyestr-4-en-3-one) to C27 (such as, 7alpha-hydroxycholest-4-en-3-one). This chain is Aldo-keto reductase family 1 member D1 (AKR1D1), found in Oryctolagus cuniculus (Rabbit).